The sequence spans 187 residues: Probable chorismate pyruvate-lyase (187 aa).

The substrate site is built by Arg-80, Leu-118, and Glu-170.

Belongs to the UbiC family.

The protein localises to the cytoplasm. The enzyme catalyses chorismate = 4-hydroxybenzoate + pyruvate. It functions in the pathway cofactor biosynthesis; ubiquinone biosynthesis. Its function is as follows. Removes the pyruvyl group from chorismate, with concomitant aromatization of the ring, to provide 4-hydroxybenzoate (4HB) for the ubiquinone pathway. The sequence is that of Probable chorismate pyruvate-lyase from Pseudomonas fluorescens (strain ATCC BAA-477 / NRRL B-23932 / Pf-5).